The following is a 528-amino-acid chain: MLKRLQVKNFRCLEDIDLPLGPLTAIVGPNGAGKTTILRAIDLVLGDVWPSLRSFRIPQDFINFDTTRAIEITVHFDPPYTQGSFNITAFRLTCKGEDADFHVDLEPLDEGGNVPRYPSGNPLRVGTDMRNHARVLFLDHRRNLAQHLPSIRGSILGRLLQPVRREFKLQDNFKQVYEQAMDLLRTEQVKQIEKTIAETAKQMLGFLGKDAMKSMEIGFGFADPANPFNSLRLQYRESDLTLPGDELGLGIQSAIVVGIFEAFRQLGEKIGTVIIEEPEMYLHPQAQRYFYRLLCEMADKDQCQIIYSTHSPIFADVNRFEALRLVRKDRDDRVVVSYVREEDKSALDNVRNRFKLGGRFDTARNEVLFAKRALLVEGYGDRVAALQLFNQLEVDPDAECIAVVDCGGKAGIELIVGVCKALDIPFVVVHDEDVWPIDERADEETRRKQEQENKAEQEKNQRIQACAGAERVFVVQPSLEAALGIGRNASDKPYRIAEILKTVDVGQPPDALRPFVEAIRQVTRPMEE.

Residues 1-153 are ATPase domain N-terminus; the sequence is MLKRLQVKNF…LAQHLPSIRG (153 aa). Position 31 to 35 (31 to 35) interacts with ATP; it reads GAGKT. Positions 154–245 are dimerization domain; the sequence is SILGRLLQPV…RESDLTLPGD (92 aa). An ATPase domain C-terminus region spans residues 246-369; it reads ELGLGIQSAI…FDTARNEVLF (124 aa). The interval 370-528 is toprim domain; the sequence is AKRALLVEGY…IRQVTRPMEE (159 aa). A divalent metal cation contacts are provided by Glu377, Asp381, Asp431, and Asp433. Residues 440-461 form a disordered region; the sequence is RADEETRRKQEQENKAEQEKNQ. Ser478 and Glu480 together coordinate a divalent metal cation. Catalysis depends on Arg487, which acts as the Stabilizes transition state or protonates leaving group.

This sequence belongs to the class 1 OLD nuclease family. As to quaternary structure, homodimer. The cofactor is Mg(2+). Mn(2+) serves as cofactor. Ca(2+) is required as a cofactor.

The catalysed reaction is Exonucleolytic cleavage in the 5'- to 3'-direction to yield nucleoside 5'-phosphates.. In terms of biological role, an exodeoxyribonuclease that degrades linear or supercoiled dsDNA from 5'-3'. Nicks and linearizes circular DNA. Activity is not stimulated by ATP or AMP-PNP, although it has DNA-stimulated ATPase activity. The protein is OLD nuclease of Thermus scotoductus (strain ATCC 700910 / SA-01).